Reading from the N-terminus, the 181-residue chain is Transmembrane protein 47 (181 aa).

An N-acetylalanine modification is found at Ala-2. 4 helical membrane-spanning segments follow: residues 21-41 (LVGL…VLSP), 83-103 (ALLL…LISI), 115-135 (VAVM…LYPI), and 152-172 (GYGL…LYCL).

Belongs to the TMEM47 family. As to quaternary structure, interacts with CTNNB1, CTNNA1, PRKCI, PARD6B. Interacts with FYB1. Expressed in podocytes (at protein level).

It localises to the membrane. It is found in the cell junction. Its subcellular location is the adherens junction. Regulates cell junction organization in epithelial cells. May play a role in the transition from adherens junction to tight junction assembly. May regulate F-actin polymerization required for tight junctional localization dynamics and affect the junctional localization of PARD6B. During podocyte differentiation may negatively regulate activity of FYN and subsequently the abundance of nephrin. This chain is Transmembrane protein 47 (Tmem47), found in Mus musculus (Mouse).